The primary structure comprises 747 residues: Histone-lysine N-methyltransferase EZH1 (747 aa).

Positions 186–229 (YSDEDEEGHNDTSDGKQDDSKEDLPVTRKRKRHAIEGSKKSSKK) are disordered. Basic and acidic residues predominate over residues 194 to 211 (HNDTSDGKQDDSKEDLPV). Residue lysine 327 forms a Glycyl lysine isopeptide (Lys-Gly) (interchain with G-Cter in SUMO2) linkage. Residues 375–421 (TSASAVAETKEGDSDRDTGNDWASSSSEANSRCQTPTKQKASPAPPQ) are disordered. Positions 382-393 (ETKEGDSDRDTG) are enriched in basic and acidic residues. Positions 395 to 414 (DWASSSSEANSRCQTPTKQK) are enriched in polar residues. The CXC domain maps to 504–606 (CRKIQLKKDN…CKVVSCKNCS (103 aa)). Positions 613 to 728 (KHLLLAPSDV…AGEELFFDYR (116 aa)) constitute an SET domain.

Belongs to the class V-like SAM-binding methyltransferase superfamily. Histone-lysine methyltransferase family. EZ subfamily. As to quaternary structure, component of the PRC2/EED-EZH1 complex, which includes EED, EZH1, SUZ12, RBBP4 and AEBP2. The PRC2/EED-EZH1 is less abundant than the PRC2/EED-EZH2 complex, has weak methyltransferase activity and compacts chromatin in the absence of the methyltransferase cofactor S-adenosyl-L-methionine (SAM). Interacts with EZHIP; the interaction blocks EZH1 methyltransferase activity.

It localises to the nucleus. It carries out the reaction L-lysyl(27)-[histone H3] + 3 S-adenosyl-L-methionine = N(6),N(6),N(6)-trimethyl-L-lysyl(27)-[histone H3] + 3 S-adenosyl-L-homocysteine + 3 H(+). Polycomb group (PcG) protein. Catalytic subunit of the PRC2/EED-EZH1 complex, which methylates 'Lys-27' of histone H3, leading to transcriptional repression of the affected target gene. Able to mono-, di- and trimethylate 'Lys-27' of histone H3 to form H3K27me1, H3K27me2 and H3K27me3, respectively. Required for embryonic stem cell derivation and self-renewal, suggesting that it is involved in safeguarding embryonic stem cell identity. Compared to EZH2-containing complexes, it is less abundant in embryonic stem cells, has weak methyltransferase activity and plays a less critical role in forming H3K27me3, which is required for embryonic stem cell identity and proper differentiation. In Bos taurus (Bovine), this protein is Histone-lysine N-methyltransferase EZH1 (EZH1).